The chain runs to 615 residues: Medium-chain acyl-CoA ligase ACSF2, mitochondrial (615 aa).

Residues 1-41 constitute a mitochondrion transit peptide; sequence MAVYVGMLRLGRLCAGSSGVLGARAALSRSWQEARLQGVRF. N6-acetyllysine is present on K179. An N6-acetyllysine; alternate modification is found at K182. K182 bears the N6-succinyllysine; alternate mark. 263–271 is a binding site for ATP; sequence TSGTTGSPK. An N6-acetyllysine mark is found at K340 and K398. K478 bears the N6-succinyllysine mark. ATP is bound by residues D493 and R508. K510 carries the N6-acetyllysine modification. Residues K544 and K570 each carry the N6-acetyllysine; alternate modification. N6-succinyllysine; alternate is present on residues K544 and K570. K599 contacts ATP. An N6-succinyllysine modification is found at K599.

Belongs to the ATP-dependent AMP-binding enzyme family.

Its subcellular location is the mitochondrion. It carries out the reaction a medium-chain fatty acid + ATP + CoA = a medium-chain fatty acyl-CoA + AMP + diphosphate. The catalysed reaction is octanoate + ATP + CoA = octanoyl-CoA + AMP + diphosphate. Its function is as follows. Acyl-CoA synthases catalyze the initial reaction in fatty acid metabolism, by forming a thioester with CoA. Has some preference toward medium-chain substrates. Plays a role in adipocyte differentiation. The protein is Medium-chain acyl-CoA ligase ACSF2, mitochondrial of Homo sapiens (Human).